The following is a 1809-amino-acid chain: Proprotein convertase subtilisin/kexin type 5 (1809 aa).

An N-terminal signal peptide occupies residues 1–34; the sequence is MDWGWGSRCCRPGRRDLLCVLALLAGCLLPVCRT. The propeptide occupies 35 to 116; the sequence is RVYTNHWAVK…QQVVKKRTKR (82 aa). Residues 117-1700 are Extracellular-facing; the sequence is DYDLSRAQST…DTVFHEHTKT (1584 aa). Positions 136–455 constitute a Peptidase S8 domain; sequence MWYMHCSDNT…FGLMDAEAMV (320 aa). Residues Asp173 and His214 each act as charge relay system in the active site. Residues Asn227 and Asn383 are each glycosylated (N-linked (GlcNAc...) asparagine). The active-site Charge relay system is the Ser388. The P/Homo B domain occupies 463–603; it reads TVPQQHVCVE…SLVLYGTSVQ (141 aa). The Cell attachment site motif lies at 521–523; that stretch reads RGD. 21 FU repeats span residues 632 to 682, 685 to 732, 736 to 779, 781 to 826, 834 to 881, 884 to 929, 931 to 964, 965 to 1010, 1012 to 1054, 1058 to 1099, 1137 to 1179, 1183 to 1230, 1232 to 1276, 1278 to 1321, 1323 to 1369, 1373 to 1418, 1422 to 1467, 1471 to 1516, 1520 to 1567, 1571 to 1616, and 1622 to 1669; these read EDYA…GHFH, KKRC…GSYQ, KNIC…GQFF, GHDC…SYYL, YKSC…GEYI, QGHC…WKFE, KKQCHPCHHTCQGCQGSGPSNCTSCKAGEFQDSE, YGEC…KTFG, KWEC…GFYG, LGEC…PTWP, TRQY…GTWL, SSSC…GFYA, DGVC…KHVA, EGVC…NFYP, MRQC…GTYK, NDEC…IEYW, SHRC…GYHT, SHQC…GYYG, SGRC…HYYA, AQTC…GEYR, and NFNC…SHPH. The interval 638-1685 is CRM (Cys-rich motif); sequence CDPECSEVGC…DCQSSTDECI (1048 aa). N-linked (GlcNAc...) asparagine glycosylation occurs at Asn667. N-linked (GlcNAc...) asparagine glycosylation is found at Asn754, Asn804, and Asn854. Residues Asn1642 and Asn1664 are each glycosylated (N-linked (GlcNAc...) asparagine). Residues 1701–1721 form a helical membrane-spanning segment; sequence ALLVTSGAMLLLLLGAAVVVW. Topologically, residues 1722 to 1809 are cytoplasmic; sequence RKSRSQPVAK…EYDDESYSYQ (88 aa). 2 AC regions span residues 1757 to 1776 and 1788 to 1809; these read VIEYRDRDYDEDDEDDIVYM and YGLLDEAEDDELEYDDESYSYQ.

The protein belongs to the peptidase S8 family. In terms of tissue distribution, expressed in the intestine, brain, adrenal gland, anterior pituitary, thyroid, ovaries, testis and lung. Highest levels are found in the gut, duodenum, jejunum and ileum. Expression is higher in female than in male reproductive organs.

Its subcellular location is the secreted. The protein resides in the endomembrane system. Its function is as follows. Serine endoprotease that processes various proproteins by cleavage at paired basic amino acids, recognizing the RXXX[KR]R consensus motif. Likely functions in the constitutive and regulated secretory pathways. Plays an essential role in pregnancy establishment by proteolytic activation of a number of important factors such as BMP2, CALD1 and alpha-integrins. May be responsible for the maturation of gastrointestinal peptides. May be involved in the cellular proliferation of adrenal cortex via the activation of growth factors. This Rattus norvegicus (Rat) protein is Proprotein convertase subtilisin/kexin type 5 (Pcsk5).